We begin with the raw amino-acid sequence, 583 residues long: Pre-mRNA-processing protein 45 (583 aa).

Disordered regions lie at residues 1 to 68 (MTSI…APED), 177 to 253 (KPKN…LTAE), 321 to 424 (MQQR…EQNR), and 519 to 583 (RGAA…DEEN). Basic and acidic residues predominate over residues 203 to 225 (TSRKNDRIMKIVERQQDPMEPPK). The segment covering 233-244 (RGPPSPPPPIMH) has biased composition (pro residues). The span at 325–350 (LAEKEKAQKEEHLRALAQKAREERSR) shows a compositional bias: basic and acidic residues. Positions 367-377 (RSYSDASSRSR) are enriched in low complexity. Composition is skewed to basic and acidic residues over residues 386 to 424 (ARER…EQNR), 519 to 538 (RGAA…KDTA), and 569 to 583 (PDSR…DEEN).

The protein belongs to the SNW family. In terms of assembly, associated with the spliceosome.

It localises to the nucleus. Its function is as follows. Involved in pre-mRNA splicing. This Emericella nidulans (strain FGSC A4 / ATCC 38163 / CBS 112.46 / NRRL 194 / M139) (Aspergillus nidulans) protein is Pre-mRNA-processing protein 45 (prp45).